Here is a 354-residue protein sequence, read N- to C-terminus: Dihydroorotate dehydrogenase (quinone) (354 aa).

FMN contacts are provided by residues alanine 61 to lysine 65 and alanine 85. Lysine 65 is a substrate binding site. Asparagine 110–phenylalanine 114 is a substrate binding site. FMN is bound by residues asparagine 139 and asparagine 170. Asparagine 170 contributes to the substrate binding site. Catalysis depends on serine 173, which acts as the Nucleophile. Asparagine 175 contributes to the substrate binding site. Residues lysine 211 and threonine 239 each contribute to the FMN site. Position 240 to 241 (asparagine 240 to threonine 241) interacts with substrate. Residues glycine 261, glycine 290, and tyrosine 311–threonine 312 contribute to the FMN site.

This sequence belongs to the dihydroorotate dehydrogenase family. Type 2 subfamily. As to quaternary structure, monomer. FMN serves as cofactor.

It is found in the cell membrane. The enzyme catalyses (S)-dihydroorotate + a quinone = orotate + a quinol. It functions in the pathway pyrimidine metabolism; UMP biosynthesis via de novo pathway; orotate from (S)-dihydroorotate (quinone route): step 1/1. In terms of biological role, catalyzes the conversion of dihydroorotate to orotate with quinone as electron acceptor. This chain is Dihydroorotate dehydrogenase (quinone), found in Cereibacter sphaeroides (strain ATCC 17023 / DSM 158 / JCM 6121 / CCUG 31486 / LMG 2827 / NBRC 12203 / NCIMB 8253 / ATH 2.4.1.) (Rhodobacter sphaeroides).